The chain runs to 107 residues: Dispanin subfamily A member 2b (107 aa).

The Extracellular segment spans residues 1–31 (MEYRTDQVPMSPRSVQGAPGTLPIRDHLPWS). A helical transmembrane segment spans residues 32–52 (IFNLFYMNVCCLGLTAMIFSV). S-palmitoyl cysteine attachment occurs at residues Cys-41 and Cys-42. Residues 53–77 (KSRDRKVVGDVEGARHYGSTARSLN) are Cytoplasmic-facing. The chain crosses the membrane as a helical span at residues 78-98 (IAATVLGILLIIILIGLAATG). At 99-107 (TIQALKYKG) the chain is on the extracellular side.

This sequence belongs to the CD225/Dispanin family. As to expression, expressed various cell types in torpedo electric organ and muscle, especially fibroblasts, capillary endothelial cells, and axonal cuff cells.

It is found in the cell membrane. The polypeptide is Dispanin subfamily A member 2b (Torpedo marmorata (Marbled electric ray)).